A 183-amino-acid polypeptide reads, in one-letter code: Proton-transporting V-type ATPase complex assembly regulator TMEM9 (183 aa).

Residues 1 to 20 form the signal peptide; the sequence is MKLLSLVAVVGCLLVPPAEA. 3 N-linked (GlcNAc...) asparagine glycosylation sites follow: Asn21, Asn38, and Asn47. The Extracellular segment spans residues 21–89; that stretch reads NKSSEDIRCK…YEERSTTTIK (69 aa). Residues 90 to 110 form a helical membrane-spanning segment; the sequence is VIIVIYLSVVGALLLYMAFLM. Over 111-183 the chain is Cytoplasmic; the sequence is LVDPLIRKPD…TVFDRHKMLS (73 aa). Phosphoserine is present on residues Ser137 and Ser144.

This sequence belongs to the TMEM9 family. In terms of assembly, interacts with the v-ATPase accessory protein ATP6AP2 and with the v-ATPase complex subunit ATP6V0D1; these interactions lead to the assembly of the v-ATPase complex. In terms of processing, N-glycosylated. Highly expressed in adrenal gland, thyroid gland, testis, ovary and prostate. Moderate expression in trachea, spinal cord, stomach, colon, small intestine and spleen. Low expression in bone marrow, lymph node, thymus and peripheral blood lymphocytes. Expression is detected in hematopoietic cell lines including those of myeloid, erythroid, B- and T-cell origin.

The protein localises to the lysosome membrane. Its subcellular location is the late endosome membrane. The protein resides in the endosome. It is found in the multivesicular body membrane. Its function is as follows. Transmembrane protein that binds to and facilitates the assembly of lysosomal proton-transporting V-type ATPase (v-ATPase), resulting in enhanced lysosomal acidification and trafficking. By bringing the v-ATPase accessory protein ATP6AP2 and the v-ATPase subunit ATP6V0D1 together, allows v-ATPase complex formation and activation. TMEM9-controlled vesicular acidification induces hyperactivation of Wnt/beta-catenin signaling, involved in development, tissue homeostasis and tissue regeneration, through lysosomal degradation of adenomatous polyposis coli/APC. In the liver, involved in hepatic regeneration. This is Proton-transporting V-type ATPase complex assembly regulator TMEM9 from Homo sapiens (Human).